The sequence spans 142 residues: Acidic phospholipase A2 Bc-PL (142 aa).

The signal sequence occupies residues 1–9; the sequence is AVCVSLLGA. Positions 10-17 are excised as a propeptide; the sequence is ANIPPQPL. 7 disulfides stabilise this stretch: Cys-28–Cys-94, Cys-44–Cys-141, Cys-46–Cys-62, Cys-61–Cys-122, Cys-68–Cys-115, Cys-78–Cys-108, and Cys-101–Cys-113. Residues Tyr-45, Gly-47, and Gly-49 each coordinate Ca(2+). His-65 is an active-site residue. Asp-66 lines the Ca(2+) pocket. Asp-116 is a catalytic residue.

Belongs to the phospholipase A2 family. Group I subfamily. D49 sub-subfamily. Ca(2+) serves as cofactor. In terms of tissue distribution, expressed by the venom gland.

It is found in the secreted. The enzyme catalyses a 1,2-diacyl-sn-glycero-3-phosphocholine + H2O = a 1-acyl-sn-glycero-3-phosphocholine + a fatty acid + H(+). Functionally, PLA2 catalyzes the calcium-dependent hydrolysis of the 2-acyl groups in 3-sn-phosphoglycerides. The polypeptide is Acidic phospholipase A2 Bc-PL (Bungarus candidus (Malayan krait)).